The chain runs to 202 residues: MSQNTLVLATGNAGKVAELRHMLSQTHATADWLVRPQSEWDFAEADETGTTFVENAIIKARHACQQTGLPAIADDSGLAVTALNGAPGVYSARYAGGNATDSDNINKLLKALEGVEESQRQASFHCVLVYMQSAEDPTPIICQGRWDGHILTHPVGEEGFGYDPVFWVKEKNCSAAQLSKTEKQALSHRGQALKQLLEQLAK.

T10–K15 provides a ligand contact to substrate. D46 and D75 together coordinate Mg(2+). Catalysis depends on D75, which acts as the Proton acceptor. Residues S76, F160 to D163, K183, and H188 to R189 contribute to the substrate site.

It belongs to the HAM1 NTPase family. As to quaternary structure, homodimer. The cofactor is Mg(2+).

The catalysed reaction is XTP + H2O = XMP + diphosphate + H(+). It catalyses the reaction dITP + H2O = dIMP + diphosphate + H(+). The enzyme catalyses ITP + H2O = IMP + diphosphate + H(+). Its function is as follows. Pyrophosphatase that catalyzes the hydrolysis of nucleoside triphosphates to their monophosphate derivatives, with a high preference for the non-canonical purine nucleotides XTP (xanthosine triphosphate), dITP (deoxyinosine triphosphate) and ITP. Seems to function as a house-cleaning enzyme that removes non-canonical purine nucleotides from the nucleotide pool, thus preventing their incorporation into DNA/RNA and avoiding chromosomal lesions. The protein is dITP/XTP pyrophosphatase of Idiomarina loihiensis (strain ATCC BAA-735 / DSM 15497 / L2-TR).